Consider the following 650-residue polypeptide: A-kinase anchor protein 10, mitochondrial (650 aa).

The transit peptide at 1 to 16 directs the protein to the mitochondrion; the sequence is RALRPDPGPAMSFFRR. 2 disordered regions span residues 1–45 and 168–192; these read RALR…QKST and SSLA…ESLD. At serine 40 the chain carries Phosphoserine. RGS domains are found at residues 113–356 and 366–493; these read TLEQ…CKYQ and YLAD…YKYL. Phosphoserine is present on serine 268. Residues 512–535 form a disordered region; it reads LAAQGSGGPPDDPLPGASDPSASQ. Over residues 525–535 the composition is skewed to low complexity; that stretch reads LPGASDPSASQ. Residues 622-635 form a PKA-RII subunit binding region; that stretch reads LAWKIAKMIVSDVM.

Its subcellular location is the mitochondrion. The protein localises to the membrane. It is found in the cytoplasm. Its function is as follows. Differentially targeted protein that binds to type I and II regulatory subunits of protein kinase A and anchors them to the mitochondria or the plasma membrane. Although the physiological relevance between PKA and AKAPS with mitochondria is not fully understood, one idea is that BAD, a proapoptotic member, is phosphorylated and inactivated by mitochondria-anchored PKA. It cannot be excluded too that it may facilitate PKA as well as G protein signal transduction, by acting as an adapter for assembling multiprotein complexes. With its RGS domain, it could lead to the interaction to G-alpha proteins, providing a link between the signaling machinery and the downstream kinase. In Sus scrofa (Pig), this protein is A-kinase anchor protein 10, mitochondrial (AKAP10).